The primary structure comprises 656 residues: UvrABC system protein B (656 aa).

The region spanning 29–414 (KLSEFKTKQQ…SLSQNNVIEQ (386 aa)) is the Helicase ATP-binding domain. 42 to 49 (GATGTGKT) contacts ATP. The Beta-hairpin signature appears at 95-118 (YFDFYQPEAYLPSKGIYIEKSATV). The region spanning 434 to 596 (QVEDLIEEII…KTPKTVVKPL (163 aa)) is the Helicase C-terminal domain. The UVR domain maps to 614–649 (AALIKQLTKEMKKAAANQNYELAIEIRDSIFELEKE).

It belongs to the UvrB family. In terms of assembly, forms a heterotetramer with UvrA during the search for lesions. Interacts with UvrC in an incision complex.

The protein resides in the cytoplasm. Its function is as follows. The UvrABC repair system catalyzes the recognition and processing of DNA lesions. A damage recognition complex composed of 2 UvrA and 2 UvrB subunits scans DNA for abnormalities. Upon binding of the UvrA(2)B(2) complex to a putative damaged site, the DNA wraps around one UvrB monomer. DNA wrap is dependent on ATP binding by UvrB and probably causes local melting of the DNA helix, facilitating insertion of UvrB beta-hairpin between the DNA strands. Then UvrB probes one DNA strand for the presence of a lesion. If a lesion is found the UvrA subunits dissociate and the UvrB-DNA preincision complex is formed. This complex is subsequently bound by UvrC and the second UvrB is released. If no lesion is found, the DNA wraps around the other UvrB subunit that will check the other stand for damage. This chain is UvrABC system protein B, found in Mycoplasma genitalium (strain ATCC 33530 / DSM 19775 / NCTC 10195 / G37) (Mycoplasmoides genitalium).